Here is a 180-residue protein sequence, read N- to C-terminus: Putative manganese efflux pump MntP (180 aa).

A run of 6 helical transmembrane segments spans residues 6 to 26 (LFALAVALGTDAFSLCIGIGI), 34 to 54 (IALISLTVLIFHILMPLLGWY), 67 to 87 (ASIAGALLLLYLGGKMIWDTI), 103 to 123 (GGLLLLSASVSMDALSVGFTL), 130 to 150 (LVLAAGVIGLVAGMMTFAGLT), and 159 to 179 (IGERAELVGGIILVGIGVKLF).

Belongs to the MntP (TC 9.B.29) family.

The protein localises to the cell membrane. Functionally, probably functions as a manganese efflux pump. The chain is Putative manganese efflux pump MntP from Desulforamulus reducens (strain ATCC BAA-1160 / DSM 100696 / MI-1) (Desulfotomaculum reducens).